A 412-amino-acid chain; its full sequence is MSIDLEWAKLDSSLANYLVDVLNRQLSNAQRPSFIGPVEVTSLEFGSASPDVELVDLRDIYRDFLEDDEDDSSTSPVKVTEGQLDAHGGEDDDGYEWVPRRAAAREYYTEGGGHGGNGSHLPMHLRHPPLRSSPTDTFSSLGHSMGMTMPVGLDMWTGHGALFHHQGSGGSPALAHGGPILRSPSPSTPFPVVHTPPLGRTPTAAYRSSSALDPDSSFLNQPVFPSQQPQQQQPQQENNHPNLQLHLQVNWHSNLRITITTSLLINYPSPMFMSLPIKLSVTGLVFNGELAVAYEGQRRRVHVCILDDLDPYGPAGDRPKREVDPDTLNDTAITPPDLDEDSPPNSGRPQKPLPIGQRLLPSIFIESEIGQADKHVLKNVTRVERFIQDVIRKTVEEELVFPNFHTLVMGDG.

The SMP-LTD domain maps to methionine 1–glycine 410. Disordered stretches follow at residues glutamate 66–glutamate 96, tyrosine 108–aspartate 136, glutamine 166–asparagine 238, and proline 314–proline 354. Positions asparagine 220–asparagine 238 are enriched in low complexity.

Belongs to the MDM12 family. In terms of assembly, component of the ER-mitochondria encounter structure (ERMES) or MDM complex, composed of MMM1, MDM10, MDM12 and MDM34. An MMM1 homodimer associates with one molecule of MDM12 on each side in a pairwise head-to-tail manner, and the SMP-LTD domains of MMM1 and MDM12 generate a continuous hydrophobic tunnel for phospholipid trafficking.

It localises to the mitochondrion outer membrane. Its subcellular location is the endoplasmic reticulum membrane. Component of the ERMES/MDM complex, which serves as a molecular tether to connect the endoplasmic reticulum (ER) and mitochondria. Components of this complex are involved in the control of mitochondrial shape and protein biogenesis, and function in nonvesicular lipid trafficking between the ER and mitochondria. MDM12 is required for the interaction of the ER-resident membrane protein MMM1 and the outer mitochondrial membrane-resident beta-barrel protein MDM10. The MDM12-MMM1 subcomplex functions in the major beta-barrel assembly pathway that is responsible for biogenesis of all mitochondrial outer membrane beta-barrel proteins, and acts in a late step after the SAM complex. The MDM10-MDM12-MMM1 subcomplex further acts in the TOM40-specific pathway after the action of the MDM12-MMM1 complex. Essential for establishing and maintaining the structure of mitochondria and maintenance of mtDNA nucleoids. The protein is Mitochondrial distribution and morphology protein 12 of Coprinopsis cinerea (strain Okayama-7 / 130 / ATCC MYA-4618 / FGSC 9003) (Inky cap fungus).